An 85-amino-acid chain; its full sequence is Progonadoliberin-2 (85 aa).

An N-terminal signal peptide occupies residues 1-23; it reads MCVSRLALLLGLLLCVGAQLSFA. Residue Q24 is modified to Pyrrolidone carboxylic acid. Glycine amide is present on G33.

The protein belongs to the GnRH family. As to expression, expressed in only one cell group in the mesencephalon.

It localises to the secreted. Its function is as follows. Stimulates the secretion of gonadotropins. This Haplochromis burtoni (Burton's mouthbrooder) protein is Progonadoliberin-2 (gnrh2).